Reading from the N-terminus, the 245-residue chain is DNA repair protein RecO (245 aa).

The protein belongs to the RecO family.

Involved in DNA repair and RecF pathway recombination. This Erwinia tasmaniensis (strain DSM 17950 / CFBP 7177 / CIP 109463 / NCPPB 4357 / Et1/99) protein is DNA repair protein RecO.